Here is a 247-residue protein sequence, read N- to C-terminus: Probable cyclic nucleotide phosphodiesterase XBJ1_0953 (247 aa).

Fe cation is bound by residues D8, H10, D52, N82, H154, H192, and H194. AMP contacts are provided by residues H10, D52, and 82-83 (NH). An AMP-binding site is contributed by H194.

The protein belongs to the cyclic nucleotide phosphodiesterase class-III family. Fe(2+) is required as a cofactor.

The polypeptide is Probable cyclic nucleotide phosphodiesterase XBJ1_0953 (Xenorhabdus bovienii (strain SS-2004) (Xenorhabdus nematophila subsp. bovienii)).